Consider the following 489-residue polypeptide: Betaine aldehyde dehydrogenase (489 aa).

K(+) is bound by residues threonine 26 and aspartate 93. 150–152 (GAW) serves as a coordination point for NAD(+). Lysine 162 acts as the Charge relay system in catalysis. Residue 176-179 (KPSE) coordinates NAD(+). Valine 180 lines the K(+) pocket. 229 to 232 (GVET) is a binding site for NAD(+). Leucine 245 is a binding site for K(+). Glutamate 251 acts as the Proton acceptor in catalysis. NAD(+) contacts are provided by glycine 253, cysteine 285, and glutamate 386. The Nucleophile role is filled by cysteine 285. Position 285 is a cysteine sulfenic acid (-SOH) (cysteine 285). 2 residues coordinate K(+): lysine 456 and glycine 459. The active-site Charge relay system is glutamate 463.

This sequence belongs to the aldehyde dehydrogenase family. In terms of assembly, dimer of dimers. The cofactor is K(+).

It carries out the reaction betaine aldehyde + NAD(+) + H2O = glycine betaine + NADH + 2 H(+). It functions in the pathway amine and polyamine biosynthesis; betaine biosynthesis via choline pathway; betaine from betaine aldehyde: step 1/1. Functionally, involved in the biosynthesis of the osmoprotectant glycine betaine. Catalyzes the irreversible oxidation of betaine aldehyde to the corresponding acid. The sequence is that of Betaine aldehyde dehydrogenase from Burkholderia multivorans (strain ATCC 17616 / 249).